The primary structure comprises 393 residues: Formate-dependent phosphoribosylglycinamide formyltransferase (393 aa).

N(1)-(5-phospho-beta-D-ribosyl)glycinamide-binding positions include 22-23 and glutamate 82; that span reads EL. ATP is bound by residues arginine 114, lysine 155, 160–165, 195–198, and glutamate 203; these read SSGKGQ and EGFV. Residues 119–308 form the ATP-grasp domain; it reads RLAAEDLGIP…EFALHLRAIL (190 aa). Residues glutamate 267 and glutamate 279 each coordinate Mg(2+). Residues aspartate 286, lysine 356, and 363 to 364 contribute to the N(1)-(5-phospho-beta-D-ribosyl)glycinamide site; that span reads RR.

It belongs to the PurK/PurT family. In terms of assembly, homodimer.

It catalyses the reaction N(1)-(5-phospho-beta-D-ribosyl)glycinamide + formate + ATP = N(2)-formyl-N(1)-(5-phospho-beta-D-ribosyl)glycinamide + ADP + phosphate + H(+). Its pathway is purine metabolism; IMP biosynthesis via de novo pathway; N(2)-formyl-N(1)-(5-phospho-D-ribosyl)glycinamide from N(1)-(5-phospho-D-ribosyl)glycinamide (formate route): step 1/1. Its function is as follows. Involved in the de novo purine biosynthesis. Catalyzes the transfer of formate to 5-phospho-ribosyl-glycinamide (GAR), producing 5-phospho-ribosyl-N-formylglycinamide (FGAR). Formate is provided by PurU via hydrolysis of 10-formyl-tetrahydrofolate. The protein is Formate-dependent phosphoribosylglycinamide formyltransferase of Hydrogenovibrio crunogenus (strain DSM 25203 / XCL-2) (Thiomicrospira crunogena).